The primary structure comprises 346 residues: Homeobox protein ceh-22 (346 aa).

Disordered stretches follow at residues 1–68 (MFNV…QSAL) and 135–190 (LPDQ…RKKR). Low complexity predominate over residues 9–24 (AATPSIASVSSVASPS). Residues 25 to 44 (EQHGLSTSVGVGVNDTTSRT) show a composition bias toward polar residues. Over residues 49–67 (AASSASSASAAPQQQSQSA) the composition is skewed to low complexity. Residues 147–156 (LDNSNTSNGN) are compositionally biased toward polar residues. Positions 166-182 (EDEDEILEDEENDEEDD) are enriched in acidic residues. A DNA-binding region (homeobox) is located at residues 189–248 (KRKRRVLFTKAQTYELERRFRSQKYLSAPEREALAMQIRLTPTQVKIWFQNHRYKTKKSH).

It belongs to the NK-2 homeobox family.

It is found in the nucleus. In terms of biological role, involved in combinatorial activation of gene expression in pharyngeal muscle. Specifically binds a site necessary for activity of the B subelement of myo-2 enhancer. Its function is as follows. Regulates distal tip cell fate. The chain is Homeobox protein ceh-22 (ceh-22) from Caenorhabditis elegans.